Here is a 94-residue protein sequence, read N- to C-terminus: uncharacterized protein (94 aa).

The signal sequence occupies residues 1–19; the sequence is MKFSGLILGALALVSGAIA.

This sequence belongs to the protease inhibitor I9 family.

This is an uncharacterized protein from Neurospora crassa (strain ATCC 24698 / 74-OR23-1A / CBS 708.71 / DSM 1257 / FGSC 987).